The primary structure comprises 408 residues: Broad specificity amino-acid racemase (408 aa).

The N-terminal stretch at methionine 1–serine 24 is a signal peptide. The cysteines at positions 71 and 97 are disulfide-linked. Catalysis depends on lysine 75, which acts as the Proton acceptor. Lysine 75 carries the post-translational modification N6-(pyridoxal phosphate)lysine. Residue arginine 174 coordinates substrate. Tyrosine 300 acts as the Proton acceptor in catalysis. Methionine 348 provides a ligand contact to substrate.

It belongs to the alanine racemase family. Bsr subfamily. It depends on pyridoxal 5'-phosphate as a cofactor.

Its subcellular location is the periplasm. It carries out the reaction an L-alpha-amino acid = a D-alpha-amino acid. The enzyme catalyses L-lysine = D-lysine. The catalysed reaction is L-arginine = D-arginine. In terms of biological role, amino-acid racemase able to utilize a broad range of substrates. The chain is Broad specificity amino-acid racemase (alr) from Vibrio vulnificus (strain CMCP6).